A 212-amino-acid polypeptide reads, in one-letter code: Thiamine-phosphate synthase (212 aa).

Residues 40–44 (QFREK) and N75 each bind 4-amino-2-methyl-5-(diphosphooxymethyl)pyrimidine. Residues D76 and D95 each coordinate Mg(2+). S113 is a binding site for 4-amino-2-methyl-5-(diphosphooxymethyl)pyrimidine. 139 to 141 (TSS) provides a ligand contact to 2-[(2R,5Z)-2-carboxy-4-methylthiazol-5(2H)-ylidene]ethyl phosphate. K142 serves as a coordination point for 4-amino-2-methyl-5-(diphosphooxymethyl)pyrimidine. Residues G171 and 191 to 192 (IS) contribute to the 2-[(2R,5Z)-2-carboxy-4-methylthiazol-5(2H)-ylidene]ethyl phosphate site.

It belongs to the thiamine-phosphate synthase family. Mg(2+) is required as a cofactor.

The enzyme catalyses 2-[(2R,5Z)-2-carboxy-4-methylthiazol-5(2H)-ylidene]ethyl phosphate + 4-amino-2-methyl-5-(diphosphooxymethyl)pyrimidine + 2 H(+) = thiamine phosphate + CO2 + diphosphate. The catalysed reaction is 2-(2-carboxy-4-methylthiazol-5-yl)ethyl phosphate + 4-amino-2-methyl-5-(diphosphooxymethyl)pyrimidine + 2 H(+) = thiamine phosphate + CO2 + diphosphate. It carries out the reaction 4-methyl-5-(2-phosphooxyethyl)-thiazole + 4-amino-2-methyl-5-(diphosphooxymethyl)pyrimidine + H(+) = thiamine phosphate + diphosphate. The protein operates within cofactor biosynthesis; thiamine diphosphate biosynthesis; thiamine phosphate from 4-amino-2-methyl-5-diphosphomethylpyrimidine and 4-methyl-5-(2-phosphoethyl)-thiazole: step 1/1. Functionally, condenses 4-methyl-5-(beta-hydroxyethyl)thiazole monophosphate (THZ-P) and 2-methyl-4-amino-5-hydroxymethyl pyrimidine pyrophosphate (HMP-PP) to form thiamine monophosphate (TMP). This is Thiamine-phosphate synthase from Staphylococcus epidermidis (strain ATCC 35984 / DSM 28319 / BCRC 17069 / CCUG 31568 / BM 3577 / RP62A).